A 188-amino-acid chain; its full sequence is Inner membrane-spanning protein YciB (188 aa).

A run of 5 helical transmembrane segments spans residues 22 to 42, 50 to 70, 72 to 92, 121 to 141, and 149 to 169; these read IYIA…VTWM, MTLV…VFHN, LFIK…LLVS, FAWA…AFWL, and FKVF…GVYI.

The protein belongs to the YciB family.

It localises to the cell inner membrane. In terms of biological role, plays a role in cell envelope biogenesis, maintenance of cell envelope integrity and membrane homeostasis. This is Inner membrane-spanning protein YciB from Pectobacterium carotovorum subsp. carotovorum (strain PC1).